A 110-amino-acid polypeptide reads, in one-letter code: Large ribosomal subunit protein uL22 (110 aa).

Belongs to the universal ribosomal protein uL22 family. In terms of assembly, part of the 50S ribosomal subunit.

Its function is as follows. This protein binds specifically to 23S rRNA; its binding is stimulated by other ribosomal proteins, e.g. L4, L17, and L20. It is important during the early stages of 50S assembly. It makes multiple contacts with different domains of the 23S rRNA in the assembled 50S subunit and ribosome. The globular domain of the protein is located near the polypeptide exit tunnel on the outside of the subunit, while an extended beta-hairpin is found that lines the wall of the exit tunnel in the center of the 70S ribosome. The chain is Large ribosomal subunit protein uL22 from Variovorax paradoxus (strain S110).